A 179-amino-acid chain; its full sequence is UPF0227 protein SO_2251 (179 aa).

It belongs to the UPF0227 family.

This Shewanella oneidensis (strain ATCC 700550 / JCM 31522 / CIP 106686 / LMG 19005 / NCIMB 14063 / MR-1) protein is UPF0227 protein SO_2251.